The primary structure comprises 337 residues: tRNA N6-adenosine threonylcarbamoyltransferase (337 aa).

The Fe cation site is built by His-110 and His-114. Residues 133-137 (LVSGK), Asp-166, Gly-179, and Asn-271 each bind substrate. Residue Asp-300 participates in Fe cation binding.

The protein belongs to the KAE1 / TsaD family. It depends on Fe(2+) as a cofactor.

The protein resides in the cytoplasm. The enzyme catalyses L-threonylcarbamoyladenylate + adenosine(37) in tRNA = N(6)-L-threonylcarbamoyladenosine(37) in tRNA + AMP + H(+). Its function is as follows. Required for the formation of a threonylcarbamoyl group on adenosine at position 37 (t(6)A37) in tRNAs that read codons beginning with adenine. Is involved in the transfer of the threonylcarbamoyl moiety of threonylcarbamoyl-AMP (TC-AMP) to the N6 group of A37, together with TsaE and TsaB. TsaD likely plays a direct catalytic role in this reaction. The protein is tRNA N6-adenosine threonylcarbamoyltransferase of Buchnera aphidicola subsp. Schizaphis graminum (strain Sg).